The sequence spans 208 residues: V-type ATP synthase subunit E (208 aa).

The protein belongs to the V-ATPase E subunit family.

Functionally, produces ATP from ADP in the presence of a proton gradient across the membrane. In Chlamydia muridarum (strain MoPn / Nigg), this protein is V-type ATP synthase subunit E (atpE).